Here is a 312-residue protein sequence, read N- to C-terminus: Ribosomal RNA small subunit methyltransferase H (312 aa).

Residues 33-35 (GGH), Asp53, Phe80, Asp102, and Gln109 each bind S-adenosyl-L-methionine.

The protein belongs to the methyltransferase superfamily. RsmH family.

It is found in the cytoplasm. It carries out the reaction cytidine(1402) in 16S rRNA + S-adenosyl-L-methionine = N(4)-methylcytidine(1402) in 16S rRNA + S-adenosyl-L-homocysteine + H(+). Its function is as follows. Specifically methylates the N4 position of cytidine in position 1402 (C1402) of 16S rRNA. This chain is Ribosomal RNA small subunit methyltransferase H, found in Heliobacterium mobile (Heliobacillus mobilis).